The sequence spans 597 residues: Elongation factor 4 (597 aa).

The tr-type G domain occupies 2–184; that stretch reads NNIRNFSIIA…SLITKVPPPK (183 aa). GTP contacts are provided by residues 14–19 and 131–134; these read DHGKST and NKID.

Belongs to the TRAFAC class translation factor GTPase superfamily. Classic translation factor GTPase family. LepA subfamily.

Its subcellular location is the cell inner membrane. The enzyme catalyses GTP + H2O = GDP + phosphate + H(+). Its function is as follows. Required for accurate and efficient protein synthesis under certain stress conditions. May act as a fidelity factor of the translation reaction, by catalyzing a one-codon backward translocation of tRNAs on improperly translocated ribosomes. Back-translocation proceeds from a post-translocation (POST) complex to a pre-translocation (PRE) complex, thus giving elongation factor G a second chance to translocate the tRNAs correctly. Binds to ribosomes in a GTP-dependent manner. This Janthinobacterium sp. (strain Marseille) (Minibacterium massiliensis) protein is Elongation factor 4.